The chain runs to 246 residues: 33kDa venom protein (246 aa).

The signal sequence occupies residues 1–20; that stretch reads MAGKEVIFIMALFIAVESSP. Tandem repeats lie at residues 83 to 96, 97 to 110, 111 to 124, 125 to 138, 139 to 152, 153 to 166, and 167 to 180. The segment at 83-243 is 12 X approximate tandem repeats of [AV][DE]X[VL]SGSX[DE]QX[KR]X[ST]; sequence GGAVSESVKQ…SGSVGNDDDI (161 aa). Residues 88-246 form a disordered region; the sequence is ESVKQKRETA…VGNDDDISVQ (159 aa). The span at 112 to 123 shows a compositional bias: polar residues; sequence ENLSGSFDQQKS. The segment covering 175-186 has biased composition (basic and acidic residues); sequence DKQKVTVEEKSE. The 8; half-length repeat unit spans residues 181 to 187; the sequence is VEEKSEP. 4 consecutive repeat copies span residues 188–201, 202–215, 216–229, and 230–243. Polar residues predominate over residues 217–228; it reads ESLSGSFDQQKS.

As to expression, expressed by the venom gland.

The protein localises to the secreted. The sequence is that of 33kDa venom protein from Chelonus sp. nr. curvimaculatus (Parasitic wasp).